Here is a 504-residue protein sequence, read N- to C-terminus: MNRTTLILFFIILSNTITVIHGYVRGCYYTNWAQYRDGEGKFLPGNIPNGLCTHILYAFAKVDELGDSKPFEWNDEDTEWSKGMYSAVTKLRETNPGLKVLLSYGGYNFGSAIFTGIAKSAQKTERFIKSAIAFLRKNNFDGFDLDWEYPVGVAEEHAKLVEAMKTAFVEEAKTSGKQRLLLTAAVSAGKGTIDGSYNVESLGKNFDLLFLMSYDLHGSWEKNVDLHGKLHPTKGEVSGIGIFNTEFAADYWASKGMPKEKIIIGIPMYAQGWTLDNPSETAIGAAASRPSSASKTNPAGGTASYWEICKYLKEGGKETVHQEGVGAYMVKGDQWYGYDNEETIRIKMKWLKEKGYGGAFIWALDFDDFTGKSCGKGPYPLLNAISSELEGESENPEITTEEPSITETEAYETDETEETSETEAYDTDETEETSETEATTYDTDETEGQECPERDGLFPHPTDCHLFIQCANNIAYVMQCPATTFFNDAIKVCDHMTNAPDTCI.

Positions 1-22 (MNRTTLILFFIILSNTITVIHG) are cleaved as a signal peptide. A GH18 domain is found at 23–392 (YVRGCYYTNW…NAISSELEGE (370 aa)). A disulfide bridge links Cys-27 with Cys-52. Chitin-binding positions include 78 to 79 (TE) and 105 to 108 (GGYN). Catalysis depends on Glu-148, which acts as the Proton donor. Chitin-binding positions include Tyr-149, 212–215 (MSYD), and Trp-362. The interval 389-450 (LEGESENPEI…YDTDETEGQE (62 aa)) is disordered. Over residues 396–408 (PEITTEEPSITET) the composition is skewed to low complexity. Tandem repeats lie at residues 407–420 (ETEA…EETS) and 421–434 (ETEA…EETS). The tract at residues 407 to 448 (ETEAYETDETEETSETEAYDTDETEETSETEATTYDTDETEG) is 3 X 14 AA approximate tandem repeats of E-T-E-A-Y-[ED]-T-D-E-T-E-E-T-S. Residues 409–435 (EAYETDETEETSETEAYDTDETEETSE) show a composition bias toward acidic residues. Residues 435-448 (ETEATTYDTDETEG) form a 3; approximate repeat. A Chitin-binding type-2 domain is found at 448–504 (GQECPERDGLFPHPTDCHLFIQCANNIAYVMQCPATTFFNDAIKVCDHMTNAPDTCI). A disulfide bond links Cys-480 and Cys-493.

Belongs to the glycosyl hydrolase 18 family. Chitinase class II subfamily. In terms of processing, O-glycosylated.

The enzyme catalyses Random endo-hydrolysis of N-acetyl-beta-D-glucosaminide (1-&gt;4)-beta-linkages in chitin and chitodextrins.. Microfilarial chitinase, which may function to degrade chitin-containing structures in the micro-filaria or in its mosquito vector during parasite development and transmission. This chain is Endochitinase, found in Brugia malayi (Filarial nematode worm).